A 207-amino-acid chain; its full sequence is Large ribosomal subunit protein uL4 (207 aa).

The tract at residues 56–75 (EVSGTTKKPFKQKGTGNARQ) is disordered.

It belongs to the universal ribosomal protein uL4 family. Part of the 50S ribosomal subunit.

One of the primary rRNA binding proteins, this protein initially binds near the 5'-end of the 23S rRNA. It is important during the early stages of 50S assembly. It makes multiple contacts with different domains of the 23S rRNA in the assembled 50S subunit and ribosome. Its function is as follows. Forms part of the polypeptide exit tunnel. The polypeptide is Large ribosomal subunit protein uL4 (Rickettsia prowazekii (strain Madrid E)).